Here is a 119-residue protein sequence, read N- to C-terminus: MIFAVGFGASLGAVARYALTSYGKKHWMQGTACPRPTLLINLTGAFFLGLAFALRLPASVYAFLGTGVLGGYTTFSTLNTEMVSLAENGQKHVLKHYLLASYLGGAVLLTCGYYLGSLL.

2 helical membrane-spanning segments follow: residues 1 to 21 (MIFAVGFGASLGAVARYALTS) and 44 to 64 (GAFFLGLAFALRLPASVYAFL). Na(+) is bound by residues Gly-70 and Thr-73. Residues 98 to 118 (LLASYLGGAVLLTCGYYLGSL) traverse the membrane as a helical segment.

It belongs to the fluoride channel Fluc/FEX (TC 1.A.43) family.

The protein resides in the cell membrane. It carries out the reaction fluoride(in) = fluoride(out). Its activity is regulated as follows. Na(+) is not transported, but it plays an essential structural role and its presence is essential for fluoride channel function. In terms of biological role, fluoride-specific ion channel. Important for reducing fluoride concentration in the cell, thus reducing its toxicity. The protein is Fluoride-specific ion channel FluC 2 of Lactobacillus delbrueckii subsp. bulgaricus (strain ATCC 11842 / DSM 20081 / BCRC 10696 / JCM 1002 / NBRC 13953 / NCIMB 11778 / NCTC 12712 / WDCM 00102 / Lb 14).